The primary structure comprises 241 residues: Uridylate kinase (241 aa).

An ATP-binding site is contributed by 15–18 (KMSG). UMP is bound at residue Gly-57. ATP-binding residues include Gly-58 and Arg-62. Residues Asp-77 and 138–145 (TGNPFFTT) each bind UMP. ATP-binding residues include Thr-165, Tyr-171, and Asp-174.

Belongs to the UMP kinase family. Homohexamer.

It is found in the cytoplasm. It catalyses the reaction UMP + ATP = UDP + ADP. It participates in pyrimidine metabolism; CTP biosynthesis via de novo pathway; UDP from UMP (UMPK route): step 1/1. With respect to regulation, inhibited by UTP. In terms of biological role, catalyzes the reversible phosphorylation of UMP to UDP. In Dichelobacter nodosus (strain VCS1703A), this protein is Uridylate kinase.